Reading from the N-terminus, the 149-residue chain is Glutamate mutase sigma subunit (149 aa).

The B12-binding domain maps to 3–140 (KATLVIGVIG…AHDINQRHDV (138 aa)). Adenosylcob(III)alamin is bound by residues 13-17 (ADCHA), His16, 61-63 (SSI), and 93-97 (NLVVG).

It belongs to the methylaspartate mutase GlmS subunit family. In terms of assembly, heterotetramer composed of 2 epsilon subunits (GlmE) and 2 sigma subunits (GlmS). GlmE exists as a homodimer and GlmS as a monomer. Adenosylcob(III)alamin serves as cofactor.

It catalyses the reaction (2S,3S)-3-methyl-L-aspartate = L-glutamate. It functions in the pathway amino-acid degradation; L-glutamate degradation via mesaconate pathway; acetate and pyruvate from L-glutamate: step 1/4. Functionally, catalyzes the carbon skeleton rearrangement of L-glutamate to L-threo-3-methylaspartate ((2S,3S)-3-methylaspartate). The polypeptide is Glutamate mutase sigma subunit (Escherichia coli O157:H7).